Consider the following 204-residue polypeptide: MRLDPFYLIVDSADWVERLVPLGVKLVQLRIKDRPEPVLREEIRRAKAACAAAACQLIINDYWRLAIDEGCDFIHLGQEDLMAADLAAIRRAGLKLGLSTHDPSELETALAAAPDYVALGPVWPTILKEMKWAPQGVERLADWRRRVGPMPLVAIGGITAERAPLVLENGADSAAVVTDITRNPDPEARTRQWLAATAPWRSVG.

Residues 28–32 (QLRIK) and asparagine 60 contribute to the 4-amino-2-methyl-5-(diphosphooxymethyl)pyrimidine site. Residues aspartate 61 and aspartate 80 each contribute to the Mg(2+) site. Serine 99 and lysine 128 together coordinate 4-amino-2-methyl-5-(diphosphooxymethyl)pyrimidine. Residues glycine 157 and 177 to 178 (VT) each bind 2-[(2R,5Z)-2-carboxy-4-methylthiazol-5(2H)-ylidene]ethyl phosphate.

This sequence belongs to the thiamine-phosphate synthase family. Mg(2+) is required as a cofactor.

It carries out the reaction 2-[(2R,5Z)-2-carboxy-4-methylthiazol-5(2H)-ylidene]ethyl phosphate + 4-amino-2-methyl-5-(diphosphooxymethyl)pyrimidine + 2 H(+) = thiamine phosphate + CO2 + diphosphate. The catalysed reaction is 2-(2-carboxy-4-methylthiazol-5-yl)ethyl phosphate + 4-amino-2-methyl-5-(diphosphooxymethyl)pyrimidine + 2 H(+) = thiamine phosphate + CO2 + diphosphate. The enzyme catalyses 4-methyl-5-(2-phosphooxyethyl)-thiazole + 4-amino-2-methyl-5-(diphosphooxymethyl)pyrimidine + H(+) = thiamine phosphate + diphosphate. It participates in cofactor biosynthesis; thiamine diphosphate biosynthesis; thiamine phosphate from 4-amino-2-methyl-5-diphosphomethylpyrimidine and 4-methyl-5-(2-phosphoethyl)-thiazole: step 1/1. Functionally, condenses 4-methyl-5-(beta-hydroxyethyl)thiazole monophosphate (THZ-P) and 2-methyl-4-amino-5-hydroxymethyl pyrimidine pyrophosphate (HMP-PP) to form thiamine monophosphate (TMP). The polypeptide is Thiamine-phosphate synthase (Rhizobium etli (strain ATCC 51251 / DSM 11541 / JCM 21823 / NBRC 15573 / CFN 42)).